A 431-amino-acid chain; its full sequence is MSTLIEAIIAREVLDSRGNPTIEVDVRLESGDVGRAIVPSGASTGAHEALELRDGDKSRYNGKGVLKAVQAVNEDIAEALIGFDAADQIALDNELIALDGTPNKSKLGANAILGVSLAAAKAAAAAFGLPLYRYLGGVYAHVLPVPMMNIMNGGQHATNSTDFQEFMIMPVGADSFREGLRWGAEIYHALKKVIHDRGFSTTVGDEGGFAPSLPTNDAPLQLIMEAIEKAGYRPGEQIYIALDPATTEIYEDGKYHLKREGRVLTSAEMVDYWVDLVNRYPIISIEDGLAEDDWEGWQLLRSKLGHKIQLVGDDFLVTNVQRLRRAIDARAANSILIKLNQIGSLTETLSAIQLAQRSGWTAVVSHRSGESEDVTIADLVVATNAGQIKTGAPARTDRIAKYNQLLRIEEELGSAAQYAGRNAFTSIPHPL.

Gln-164 contributes to the (2R)-2-phosphoglycerate binding site. The active-site Proton donor is the Glu-206. Residues Asp-243, Glu-286, and Asp-313 each contribute to the Mg(2+) site. 4 residues coordinate (2R)-2-phosphoglycerate: Lys-338, Arg-367, Ser-368, and Lys-389. Lys-338 acts as the Proton acceptor in catalysis.

Belongs to the enolase family. The cofactor is Mg(2+).

The protein resides in the cytoplasm. It localises to the secreted. Its subcellular location is the cell surface. It catalyses the reaction (2R)-2-phosphoglycerate = phosphoenolpyruvate + H2O. Its pathway is carbohydrate degradation; glycolysis; pyruvate from D-glyceraldehyde 3-phosphate: step 4/5. Catalyzes the reversible conversion of 2-phosphoglycerate (2-PG) into phosphoenolpyruvate (PEP). It is essential for the degradation of carbohydrates via glycolysis. This Chloroflexus aggregans (strain MD-66 / DSM 9485) protein is Enolase.